A 332-amino-acid polypeptide reads, in one-letter code: T-cell surface glycoprotein CD1c2 (332 aa).

Positions 1–17 are cleaved as a signal peptide; the sequence is MLFLQFLFVDVVLGGSI. Residues 18–300 lie on the Extracellular side of the membrane; sequence TENVVQENIS…IILYWGHGLS (283 aa). N25, N38, and N75 each carry an N-linked (GlcNAc...) asparagine glycan. Cystine bridges form between C120–C184 and C224–C279. In terms of domain architecture, Ig-like spans 205–292; the sequence is PEVWLSSSPN…HSSLRDQDII (88 aa). Residues 301 to 321 traverse the membrane as a helical segment; it reads VILIALAVIVPLVLLIVLVLL. Residues 322 to 332 are Cytoplasmic-facing; sequence CKKRCTYQGIP.

In terms of assembly, heterodimer with B2M (beta-2-microglobulin).

The protein resides in the cell membrane. The protein localises to the endosome membrane. Functionally, antigen-presenting protein that binds self and non-self lipid and glycolipid antigens and presents them to T-cell receptors on natural killer T-cells. The protein is T-cell surface glycoprotein CD1c2 (CD1C2) of Cavia porcellus (Guinea pig).